A 605-amino-acid chain; its full sequence is MEAPIVLLLLLWLALAPTPGSASSEAPPLVNEDVKRTVDLSSHLAKVTAEVVLAHPGGGSTARASSFVLALEPELESRLAHLGVQVKGEDEEDNNLEVRETKMKGKSGRFFTVKLPVALDPGSKISIVVETVYTHVLHPYPTQITQSEKQFVVFEGNHYFYSPYPTKTQTMRVRLASRNVESHTKLGNPSRSEDILDYGPFKDIPAYSQDTFKVHYENNSPFLTITSMTRVIEVSHWGNIAVEENVDLKHTGAVLKGPFSRYDYQRQPDSGISSIRSFKTILPAAAQDVYYRDEIGNVSTSHLLILDDSVEMEIRPRFGLFGGWKTHYIVGYNLPSYEYLYNLGDQYALKMRFVDHVFDEQVIDSLTVKIILPEGAKNIQVDSPYDISRAPDELHYTYLDTFGRPVIVAYKKNLVEQHIQDIVVHYTFNKVLMLQEPLLVVAAFYILFFTVIIYVRLDFSITKDPAAEARMKVACITEQVLTLVNKRLGLYRHFDETVNRYKQSRDISTLNSGKKSLETEHKAVTSEIAVLQSRLKTEGSDLCDRVSEMQKLDAQVKELVLKSAVEAERLVAGKLKKDTYIENEKLSSGKRQELVTKIDHILDAL.

The first 22 residues, Met-1–Ala-22, serve as a signal peptide directing secretion. At Ser-23 to Pro-437 the chain is on the lumenal side. Lys-185 carries the post-translational modification N6-acetyllysine. Residue Asn-297 is glycosylated (N-linked (GlcNAc...) asparagine). A helical membrane pass occupies residues Leu-438–Val-455. The Cytoplasmic portion of the chain corresponds to Arg-456 to Leu-605. Lys-536 carries the post-translational modification N6-acetyllysine; alternate. A Glycyl lysine isopeptide (Lys-Gly) (interchain with G-Cter in SUMO2); alternate cross-link involves residue Lys-536.

The protein belongs to the OST1 family. In terms of assembly, component of the oligosaccharyltransferase (OST) complex. OST exists in two different complex forms which contain common core subunits RPN1, RPN2, OST48, OST4, DAD1 and TMEM258, either STT3A or STT3B as catalytic subunits, and form-specific accessory subunits. STT3A complex assembly occurs through the formation of 3 subcomplexes. Subcomplex 1 contains RPN1 and TMEM258, subcomplex 2 contains the STT3A-specific subunits STT3A, DC2/OSTC, and KCP2 as well as the core subunit OST4, and subcomplex 3 contains RPN2, DAD1, and OST48. The STT3A complex can form stable complexes with the Sec61 complex or with both the Sec61 and TRAP complexes. Interacts with TMEM35A/NACHO. In terms of processing, ubiquitinated by the ECS(ASB11) complex. Post-translationally, ufmylated by UFL1 in response to endoplasmic reticulum stress, promoting reticulophagy of endoplasmic reticulum sheets. Expressed in all tissues tested.

It is found in the endoplasmic reticulum membrane. The protein operates within protein modification; protein glycosylation. In terms of biological role, subunit of the oligosaccharyl transferase (OST) complex that catalyzes the initial transfer of a defined glycan (Glc(3)Man(9)GlcNAc(2) in eukaryotes) from the lipid carrier dolichol-pyrophosphate to an asparagine residue within an Asn-X-Ser/Thr consensus motif in nascent polypeptide chains, the first step in protein N-glycosylation. N-glycosylation occurs cotranslationally and the complex associates with the Sec61 complex at the channel-forming translocon complex that mediates protein translocation across the endoplasmic reticulum (ER). All subunits are required for a maximal enzyme activity. The sequence is that of Dolichyl-diphosphooligosaccharide--protein glycosyltransferase subunit 1 from Rattus norvegicus (Rat).